Reading from the N-terminus, the 220-residue chain is MQLSRYIDHTLLKPEAQTAQIEKLCAEAKEHNFFSVCVNTSYVKTCAELLKDSSVKVCCVVGFPLGAMDTTSKAFETKTAIANGAQEIDMVIQIGALKDRRLDYVRDDIKAVVQAANGHTVKVIIETSLLNQEDKTLACKAALEAGAHFVKTSTGFGGGGATVDDVKLMKSVVGSSMEVKASGGIKDAQQAKSMIDAGATRLGTSSGITIIQGGSVQGGY.

Catalysis depends on Asp-89, which acts as the Proton donor/acceptor. Residue Lys-151 is the Schiff-base intermediate with acetaldehyde of the active site. Lys-180 acts as the Proton donor/acceptor in catalysis.

The protein belongs to the DeoC/FbaB aldolase family. DeoC type 1 subfamily.

It localises to the cytoplasm. The catalysed reaction is 2-deoxy-D-ribose 5-phosphate = D-glyceraldehyde 3-phosphate + acetaldehyde. It participates in carbohydrate degradation; 2-deoxy-D-ribose 1-phosphate degradation; D-glyceraldehyde 3-phosphate and acetaldehyde from 2-deoxy-alpha-D-ribose 1-phosphate: step 2/2. Catalyzes a reversible aldol reaction between acetaldehyde and D-glyceraldehyde 3-phosphate to generate 2-deoxy-D-ribose 5-phosphate. The polypeptide is Deoxyribose-phosphate aldolase (Bdellovibrio bacteriovorus (strain ATCC 15356 / DSM 50701 / NCIMB 9529 / HD100)).